The chain runs to 408 residues: Elongation factor Tu, chloroplastic (408 aa).

In terms of domain architecture, tr-type G spans 10-213 (KPHVNIGTIG…KVDEYIPTPE (204 aa)). Residues 19 to 26 (GHVDHGKT) form a G1 region. GTP is bound at residue 19 to 26 (GHVDHGKT). Threonine 26 is a binding site for Mg(2+). Residues 59 to 63 (GITIN) form a G2 region. Residues 80–83 (DCPG) form a G3 region. Residues 80–84 (DCPGH) and 135–138 (NKAD) contribute to the GTP site. Positions 135–138 (NKAD) are G4. The interval 173–175 (SAL) is G5.

This sequence belongs to the TRAFAC class translation factor GTPase superfamily. Classic translation factor GTPase family. EF-Tu/EF-1A subfamily.

It is found in the plastid. The protein localises to the chloroplast. It carries out the reaction GTP + H2O = GDP + phosphate + H(+). In terms of biological role, GTP hydrolase that promotes the GTP-dependent binding of aminoacyl-tRNA to the A-site of ribosomes during protein biosynthesis. The protein is Elongation factor Tu, chloroplastic (tufA) of Guillardia theta (Cryptophyte).